The primary structure comprises 201 residues: Large ribosomal subunit protein eL15B (201 aa).

Positions 161–182 (SRGLTSIGKKSRGIGKGHRYNN) are disordered. Basic residues predominate over residues 169–179 (KKSRGIGKGHR). The residue at position 183 (Ser183) is a Phosphoserine.

This sequence belongs to the eukaryotic ribosomal protein eL15 family. As to quaternary structure, component of the large ribosomal subunit (LSU). Mature yeast ribosomes consist of a small (40S) and a large (60S) subunit. The 40S small subunit contains 1 molecule of ribosomal RNA (18S rRNA) and at least 33 different proteins. The large 60S subunit contains 3 rRNA molecules (25S, 5.8S and 5S rRNA) and at least 46 different proteins.

It is found in the cytoplasm. It localises to the nucleus. The protein localises to the nucleolus. In terms of biological role, component of the ribosome, a large ribonucleoprotein complex responsible for the synthesis of proteins in the cell. The small ribosomal subunit (SSU) binds messenger RNAs (mRNAs) and translates the encoded message by selecting cognate aminoacyl-transfer RNA (tRNA) molecules. The large subunit (LSU) contains the ribosomal catalytic site termed the peptidyl transferase center (PTC), which catalyzes the formation of peptide bonds, thereby polymerizing the amino acids delivered by tRNAs into a polypeptide chain. The nascent polypeptides leave the ribosome through a tunnel in the LSU and interact with protein factors that function in enzymatic processing, targeting, and the membrane insertion of nascent chains at the exit of the ribosomal tunnel. This Schizosaccharomyces pombe (strain 972 / ATCC 24843) (Fission yeast) protein is Large ribosomal subunit protein eL15B (rpl1502).